The chain runs to 331 residues: Lipoyl synthase (331 aa).

Residues 1 to 14 (MSTQLDASQPSNDV) are compositionally biased toward polar residues. Residues 1-32 (MSTQLDASQPSNDVASPAAYDPTQKQKSQAKT) form a disordered region. Positions 78, 83, 89, 104, 108, 111, and 318 each coordinate [4Fe-4S] cluster. The Radical SAM core domain maps to 89-307 (CFGKGTATFM…EREAYAMGFS (219 aa)).

It belongs to the radical SAM superfamily. Lipoyl synthase family. The cofactor is [4Fe-4S] cluster.

The protein resides in the cytoplasm. The enzyme catalyses [[Fe-S] cluster scaffold protein carrying a second [4Fe-4S](2+) cluster] + N(6)-octanoyl-L-lysyl-[protein] + 2 oxidized [2Fe-2S]-[ferredoxin] + 2 S-adenosyl-L-methionine + 4 H(+) = [[Fe-S] cluster scaffold protein] + N(6)-[(R)-dihydrolipoyl]-L-lysyl-[protein] + 4 Fe(3+) + 2 hydrogen sulfide + 2 5'-deoxyadenosine + 2 L-methionine + 2 reduced [2Fe-2S]-[ferredoxin]. It participates in protein modification; protein lipoylation via endogenous pathway; protein N(6)-(lipoyl)lysine from octanoyl-[acyl-carrier-protein]: step 2/2. In terms of biological role, catalyzes the radical-mediated insertion of two sulfur atoms into the C-6 and C-8 positions of the octanoyl moiety bound to the lipoyl domains of lipoate-dependent enzymes, thereby converting the octanoylated domains into lipoylated derivatives. In Bordetella avium (strain 197N), this protein is Lipoyl synthase.